A 367-amino-acid polypeptide reads, in one-letter code: Membrane-bound lytic murein transglycosylase C (367 aa).

A signal peptide spans 1-19 (MRKYAKYLPFCLVVPFLAA). Cys-20 carries the N-palmitoyl cysteine lipid modification. The S-diacylglycerol cysteine moiety is linked to residue Cys-20.

This sequence belongs to the transglycosylase Slt family.

It localises to the cell outer membrane. It carries out the reaction Exolytic cleavage of the (1-&gt;4)-beta-glycosidic linkage between N-acetylmuramic acid (MurNAc) and N-acetylglucosamine (GlcNAc) residues in peptidoglycan, from either the reducing or the non-reducing ends of the peptidoglycan chains, with concomitant formation of a 1,6-anhydrobond in the MurNAc residue.. Functionally, murein-degrading enzyme. May play a role in recycling of muropeptides during cell elongation and/or cell division. The polypeptide is Membrane-bound lytic murein transglycosylase C (Haemophilus ducreyi (strain 35000HP / ATCC 700724)).